Consider the following 303-residue polypeptide: Coenzyme PQQ synthesis protein B (303 aa).

It belongs to the PqqB family.

The protein operates within cofactor biosynthesis; pyrroloquinoline quinone biosynthesis. In terms of biological role, may be involved in the transport of PQQ or its precursor to the periplasm. The chain is Coenzyme PQQ synthesis protein B from Pseudomonas putida (strain ATCC 700007 / DSM 6899 / JCM 31910 / BCRC 17059 / LMG 24140 / F1).